A 420-amino-acid polypeptide reads, in one-letter code: L-rhamnose isomerase (420 aa).

Mn(2+)-binding residues include His-264, Asp-296, and Asp-298.

It belongs to the rhamnose isomerase family. Mn(2+) is required as a cofactor.

The protein resides in the cytoplasm. It carries out the reaction L-rhamnopyranose = L-rhamnulose. It participates in carbohydrate degradation; L-rhamnose degradation; glycerone phosphate from L-rhamnose: step 1/3. Catalyzes the interconversion of L-rhamnose and L-rhamnulose. In Listeria monocytogenes serotype 4b (strain F2365), this protein is L-rhamnose isomerase.